Reading from the N-terminus, the 399-residue chain is Methylthioribose kinase (399 aa).

Residues Asn-40, Lys-57, and 111–113 (EDL) contribute to the ATP site. Residue Asp-229 coordinates substrate. 246 to 248 (DAE) provides a ligand contact to ATP. Arg-344 is a binding site for substrate.

The protein belongs to the methylthioribose kinase family. Homodimer.

The enzyme catalyses 5-(methylsulfanyl)-D-ribose + ATP = 5-(methylsulfanyl)-alpha-D-ribose 1-phosphate + ADP + H(+). Its pathway is amino-acid biosynthesis; L-methionine biosynthesis via salvage pathway; S-methyl-5-thio-alpha-D-ribose 1-phosphate from S-methyl-5'-thioadenosine (hydrolase route): step 2/2. In terms of biological role, catalyzes the phosphorylation of methylthioribose into methylthioribose-1-phosphate. The sequence is that of Methylthioribose kinase from Citrobacter koseri (strain ATCC BAA-895 / CDC 4225-83 / SGSC4696).